We begin with the raw amino-acid sequence, 117 residues long: Flagellar transcriptional regulator FlhD (117 aa).

It belongs to the FlhD family. Homodimer; disulfide-linked. Forms a heterohexamer composed of two FlhC and four FlhD subunits. Each FlhC binds a FlhD dimer, forming a heterotrimer, and a hexamer assembles by dimerization of two heterotrimers.

Its subcellular location is the cytoplasm. In terms of biological role, functions in complex with FlhC as a master transcriptional regulator that regulates transcription of several flagellar and non-flagellar operons by binding to their promoter region. Activates expression of class 2 flagellar genes, including fliA, which is a flagellum-specific sigma factor that turns on the class 3 genes. Also regulates genes whose products function in a variety of physiological pathways. This chain is Flagellar transcriptional regulator FlhD, found in Erwinia amylovora (strain CFBP1430).